The primary structure comprises 983 residues: MKNLFNFFKTSSELRLAYRLLKQINQKRSFYGAMTDFDLANQTNIFKKRLANGEKLKDIRVDAFAVAREATKRILGKTPYDVQILGGLILDMGSVAEMKTGEGKTIASIPPVYLNALLGQGVIVSTVNEYLAERDAEDNGKVYNFLGLTVGINKTEMDANTKRMMYNADITYSVHSELGFDYLRDNMVFSAAEKVQRGLNFCLIDEVDSILIDEAKTPLIISGGKTNLPAQYLSANQFVNTLIAEDFYIDEETKGIKLNDKGIDKANAFFGLRNLYEIQNSEIVHRIQNALRANKVMKRDVEYIVQDGKIALVDQFTGRIMAGRSYSEGLQQALQAKEGLEIEPETKTLATITYQNFFRLFKKLSGMTGTAKTEEQEFIDVYNMRVNVIPTNKPMIRKDERDEIFATSHEKNQAIISEVERVHKRGQPILIGTSQVVDSETLSEMLNQKGLYHTVLNAKQNQLEAEIIAKAGRKNAITIATNMAGRGTDIILEPGVTELGGLYILGTDKAEARRIDNQLRGRSGRQGDVGISRFFISLQDQLFRRFTNFDQIFGAYGQTNGAIKGKYIHAVLLAAQKKIEGFNFDMRKTVLSYDDVIRQQRDLIYAQRDILLQIENFDHYIQKMIIRAVDIILSYDFIILPNQEIHYKNLINFLNDNLSRITHFNFGQIGIENYPIEQLNEFLIKQLETIYFKQIQSVLKENLGKTYFESERYIILSTLDSQWQNHIDTIDKLRSSANLVQYSQKNPYQIFTEEATKKFNILVAESAYQAIVSLFNNSNAEKIEYIKAILSDGTAISYPADSPQEIIDQIIASNEERIAAARKAKEEKQPEFIEKQLAKLKIEKVESGEEFELWKIGDNKLVNLKKEMPLDEKQNILVKMQQEQLEMMSEEEKNLIQEQNLEIEEIEEIEEEIQNENPQKVEFVDFKNDPDAYNKLIFGADYADKQLISSEEENNNEKTNININEDLERTKGEAQQTAKNPNE.

ATP is bound by residues Q83, 101 to 105 (GEGKT), and D489. The disordered stretch occupies residues 948 to 983 (ISSEEENNNEKTNININEDLERTKGEAQQTAKNPNE). The span at 973–983 (EAQQTAKNPNE) shows a compositional bias: polar residues.

This sequence belongs to the SecA family. In terms of assembly, monomer and homodimer. Part of the essential Sec protein translocation apparatus which comprises SecA, SecYEG and auxiliary proteins SecDF. Other proteins may also be involved.

The protein localises to the cell membrane. The protein resides in the cytoplasm. It carries out the reaction ATP + H2O + cellular proteinSide 1 = ADP + phosphate + cellular proteinSide 2.. Its function is as follows. Part of the Sec protein translocase complex. Interacts with the SecYEG preprotein conducting channel. Has a central role in coupling the hydrolysis of ATP to the transfer of proteins into and across the cell membrane, serving as an ATP-driven molecular motor driving the stepwise translocation of polypeptide chains across the membrane. The sequence is that of Protein translocase subunit SecA from Mesomycoplasma hyopneumoniae (strain 7448) (Mycoplasma hyopneumoniae).